A 281-amino-acid polypeptide reads, in one-letter code: Pantothenate synthetase (281 aa).

30-37 (MGYLHEGH) is a binding site for ATP. H37 serves as the catalytic Proton donor. (R)-pantoate is bound at residue Q61. Q61 contacts beta-alanine. 147 to 150 (GEKD) is an ATP binding site. (R)-pantoate is bound at residue Q153. Residues I176 and 184–187 (KSSR) each bind ATP.

The protein belongs to the pantothenate synthetase family. Homodimer.

The protein localises to the cytoplasm. The enzyme catalyses (R)-pantoate + beta-alanine + ATP = (R)-pantothenate + AMP + diphosphate + H(+). It functions in the pathway cofactor biosynthesis; (R)-pantothenate biosynthesis; (R)-pantothenate from (R)-pantoate and beta-alanine: step 1/1. Its function is as follows. Catalyzes the condensation of pantoate with beta-alanine in an ATP-dependent reaction via a pantoyl-adenylate intermediate. In Clostridium botulinum (strain ATCC 19397 / Type A), this protein is Pantothenate synthetase.